A 312-amino-acid chain; its full sequence is Methionyl-tRNA formyltransferase (312 aa).

A (6S)-5,6,7,8-tetrahydrofolate-binding site is contributed by 109–112 (SILP).

It belongs to the Fmt family.

It carries out the reaction L-methionyl-tRNA(fMet) + (6R)-10-formyltetrahydrofolate = N-formyl-L-methionyl-tRNA(fMet) + (6S)-5,6,7,8-tetrahydrofolate + H(+). Functionally, attaches a formyl group to the free amino group of methionyl-tRNA(fMet). The formyl group appears to play a dual role in the initiator identity of N-formylmethionyl-tRNA by promoting its recognition by IF2 and preventing the misappropriation of this tRNA by the elongation apparatus. In Dictyoglomus thermophilum (strain ATCC 35947 / DSM 3960 / H-6-12), this protein is Methionyl-tRNA formyltransferase.